The following is a 339-amino-acid chain: N-acetyl-gamma-glutamyl-phosphate reductase (339 aa).

Residue Cys145 is part of the active site.

The protein belongs to the NAGSA dehydrogenase family. Type 1 subfamily.

It localises to the cytoplasm. The enzyme catalyses N-acetyl-L-glutamate 5-semialdehyde + phosphate + NADP(+) = N-acetyl-L-glutamyl 5-phosphate + NADPH + H(+). It functions in the pathway amino-acid biosynthesis; L-arginine biosynthesis; N(2)-acetyl-L-ornithine from L-glutamate: step 3/4. Functionally, catalyzes the NADPH-dependent reduction of N-acetyl-5-glutamyl phosphate to yield N-acetyl-L-glutamate 5-semialdehyde. The chain is N-acetyl-gamma-glutamyl-phosphate reductase from Thermotoga petrophila (strain ATCC BAA-488 / DSM 13995 / JCM 10881 / RKU-1).